Reading from the N-terminus, the 122-residue chain is Acidic phospholipase A2 Tpu-E6b (122 aa).

Intrachain disulfides connect Cys-26–Cys-115, Cys-28–Cys-44, Cys-43–Cys-95, Cys-49–Cys-122, Cys-50–Cys-88, Cys-57–Cys-81, and Cys-75–Cys-86. Ca(2+)-binding residues include Tyr-27, Gly-29, and Gly-31. His-47 is an active-site residue. Asp-48 lines the Ca(2+) pocket. Residue Asp-89 is part of the active site.

Monomer. The cofactor is Ca(2+). As to expression, expressed by the venom gland.

It localises to the secreted. It carries out the reaction a 1,2-diacyl-sn-glycero-3-phosphocholine + H2O = a 1-acyl-sn-glycero-3-phosphocholine + a fatty acid + H(+). Functionally, snake venom phospholipase A2 (PLA2) that weakly inhibits ADP-induced platelet aggregation when tested on platelet rich plasma from human and rabbit blood (15-25% of inhibition at 5-10 ug of enzyme). Exhibits moderate hydrolytic activities toward L-dipalmitoyl phosphatidylcholine. PLA2 catalyzes the calcium-dependent hydrolysis of the 2-acyl groups in 3-sn-phosphoglycerides. This Craspedocephalus puniceus (Flat-nosed pitviper) protein is Acidic phospholipase A2 Tpu-E6b.